Reading from the N-terminus, the 403-residue chain is Envelope glycoprotein D (403 aa).

The signal sequence occupies residues M1 to A34. Residues M35 to Q357 are Virion surface-facing. 2 N-linked (GlcNAc...) asparagine; by host glycosylation sites follow: N87 and N138. 3 cysteine pairs are disulfide-bonded: C88/C209, C127/C222, and C139/C148. N230 and N306 each carry an N-linked (GlcNAc...) asparagine; by host glycan. A helical membrane pass occupies residues I358–I378. Residues W379–L403 are Intravirion-facing.

It belongs to the herpesviridae glycoprotein D family.

It localises to the virion membrane. In terms of biological role, envelope glycoprotein that binds to host cell entry receptors, promoting the virus entry into host cells. May trigger fusion with host membrane, by recruiting the fusion machinery composed of gB and gH/gL. This Gallus gallus (Chicken) protein is Envelope glycoprotein D (MDV094).